An 860-amino-acid polypeptide reads, in one-letter code: Leucine--tRNA ligase (860 aa).

Positions 42 to 52 (PYPSGRLHMGH) match the 'HIGH' region motif. Residues 619–623 (KMSKS) carry the 'KMSKS' region motif. An ATP-binding site is contributed by K622.

Belongs to the class-I aminoacyl-tRNA synthetase family.

It is found in the cytoplasm. It catalyses the reaction tRNA(Leu) + L-leucine + ATP = L-leucyl-tRNA(Leu) + AMP + diphosphate. This Histophilus somni (strain 129Pt) (Haemophilus somnus) protein is Leucine--tRNA ligase.